The sequence spans 461 residues: Alkaline phosphatase 4 (461 aa).

The N-terminal stretch at 1 to 41 is a signal peptide; that stretch reads MKKMSLFQNMKSKLLPIAAVSVLTAGIFAGAELQQTEKASA. Asp-58 contributes to the Mg(2+) binding site. Asp-58 provides a ligand contact to Zn(2+). Ser-108 (phosphoserine intermediate) is an active-site residue. Mg(2+) contacts are provided by Thr-161 and Glu-282. Zn(2+)-binding residues include Asp-287, His-291, Asp-329, His-330, and His-423.

This sequence belongs to the alkaline phosphatase family. In terms of assembly, monomer. The cofactor is Mg(2+). It depends on Zn(2+) as a cofactor.

It carries out the reaction a phosphate monoester + H2O = an alcohol + phosphate. This Bacillus subtilis (strain 168) protein is Alkaline phosphatase 4 (phoA).